The chain runs to 344 residues: Mitochondrial mRNA pseudouridine synthase Rpusd3 (344 aa).

The N-terminal 36 residues, 1-36, are a transit peptide targeting the mitochondrion; sequence MGALRVLRYVSMIWRPELGSCARQRDAGFGTEARRP. Residues 25–53 form a disordered region; sequence RDAGFGTEARRPSQPHRSSKHKDLVEDQP.

This sequence belongs to the pseudouridine synthase RluA family. Forms a regulatory protein-RNA complex, consisting of RCC1L, NGRN, RPUSD3, RPUSD4, TRUB2, FASTKD2 and 16S mt-rRNA.

Its subcellular location is the mitochondrion matrix. The catalysed reaction is a uridine in mRNA = a pseudouridine in mRNA. Catalyzes uridine to pseudouridine isomerization (pseudouridylation) of specific mitochondrial mRNAs (mt-mRNAs), a post-transcriptional modification necessary for their translation. Acts at position 390 in COXI mt-mRNA and at position 697-699 in mitochondrial COXIII mt-mRNA. As a component of a functional protein-RNA module, consisting of RCC1L, NGRN, RPUSD3, RPUSD4, TRUB2, FASTKD2 and 16S mitochondrial ribosomal RNA (16S mt-rRNA), controls 16S mt-rRNA abundance and may play a role in mitochondrial ribosome biogenesis. The polypeptide is Mitochondrial mRNA pseudouridine synthase Rpusd3 (Rpusd3) (Mus musculus (Mouse)).